The chain runs to 904 residues: Protein translocase subunit SecA (904 aa).

Residues Gln89, 107-111 (GEGKT), and Asp496 each bind ATP. The interval 870–904 (GGFQELSSGTPSPTVTVTTSSGGGTERKTSRRRKR) is disordered. Positions 876–889 (SSGTPSPTVTVTTS) are enriched in low complexity.

The protein belongs to the SecA family. In terms of assembly, monomer and homodimer. Part of the essential Sec protein translocation apparatus which comprises SecA, SecYEG and auxiliary proteins SecDF. Other proteins may also be involved.

Its subcellular location is the cell inner membrane. The protein resides in the cytoplasm. The catalysed reaction is ATP + H2O + cellular proteinSide 1 = ADP + phosphate + cellular proteinSide 2.. Functionally, part of the Sec protein translocase complex. Interacts with the SecYEG preprotein conducting channel. Has a central role in coupling the hydrolysis of ATP to the transfer of proteins into and across the cell membrane, serving as an ATP-driven molecular motor driving the stepwise translocation of polypeptide chains across the membrane. This chain is Protein translocase subunit SecA, found in Leptospira borgpetersenii serovar Hardjo-bovis (strain JB197).